The primary structure comprises 341 residues: Glucokinase (341 aa).

ATP is bound at residue 7-12; it reads GDIGGT.

Belongs to the bacterial glucokinase family.

It localises to the cytoplasm. It carries out the reaction D-glucose + ATP = D-glucose 6-phosphate + ADP + H(+). The polypeptide is Glucokinase (Nostoc punctiforme (strain ATCC 29133 / PCC 73102)).